Consider the following 430-residue polypeptide: Probable ribosomal RNA small subunit methyltransferase B (430 aa).

S-adenosyl-L-methionine is bound by residues Cys-246 to Lys-252, Asp-270, Asp-299, and Asp-318. Residue Cys-371 is the Nucleophile of the active site.

This sequence belongs to the class I-like SAM-binding methyltransferase superfamily. RsmB/NOP family.

It localises to the cytoplasm. The enzyme catalyses cytidine(967) in 16S rRNA + S-adenosyl-L-methionine = 5-methylcytidine(967) in 16S rRNA + S-adenosyl-L-homocysteine + H(+). In terms of biological role, specifically methylates the cytosine at position 967 (m5C967) of 16S rRNA. This is Probable ribosomal RNA small subunit methyltransferase B from Coxiella burnetii (strain RSA 493 / Nine Mile phase I).